Here is a 150-residue protein sequence, read N- to C-terminus: uncharacterized protein (150 aa).

The Rhodanese domain maps to Gly19 to Ser93.

This is an uncharacterized protein from Synechococcus elongatus.